Consider the following 335-residue polypeptide: Taste receptor type 2 member 119 (335 aa).

Topologically, residues Met-1–Leu-7 are extracellular. A helical membrane pass occupies residues Phe-8–Val-28. The Cytoplasmic portion of the chain corresponds to Val-29–Pro-43. A helical transmembrane segment spans residues Leu-44 to Phe-64. Over Ala-65 to Asn-81 the chain is Extracellular. Asn-81 is a glycosylation site (N-linked (GlcNAc...) asparagine). Residues Ile-82–Phe-102 form a helical membrane-spanning segment. Residues Tyr-103–Arg-124 are Cytoplasmic-facing. Residues Leu-125–Ser-145 traverse the membrane as a helical segment. Over Arg-146–Ser-176 the chain is Extracellular. A glycan (N-linked (GlcNAc...) asparagine) is linked at Asn-163. A helical membrane pass occupies residues Val-177–Ile-197. The Cytoplasmic segment spans residues Tyr-198–Ala-224. Residues Met-225–Ile-245 form a helical membrane-spanning segment. The Extracellular segment spans residues Ser-246–Thr-256. A helical transmembrane segment spans residues Phe-257–Leu-277. Residues Gly-278–Ser-335 are Cytoplasmic-facing. Positions Pro-308–Cys-327 are disordered.

This sequence belongs to the G-protein coupled receptor T2R family. Expressed in subsets of taste receptor cells of the tongue and palate epithelium and exclusively in gustducin-positive cells. Expressed in the duodenum, antrum and fundus (part of the stomach).

The protein resides in the membrane. Its function is as follows. Gustducin-coupled receptor implicated in the perception of bitter compounds in the oral cavity and the gastrointestinal tract. Signals through PLCB2 and the calcium-regulated cation channel TRPM5. The protein is Taste receptor type 2 member 119 (Tas2r119) of Rattus norvegicus (Rat).